We begin with the raw amino-acid sequence, 48 residues long: Large ribosomal subunit protein uL14 (48 aa).

This sequence belongs to the universal ribosomal protein uL14 family.

This chain is Large ribosomal subunit protein uL14 (RPL23), found in Onchocerca volvulus.